The sequence spans 589 residues: Capsid scaffolding protein (589 aa).

Residues H47, S118, and H142 each act as charge relay system in the active site. Basic and acidic residues predominate over residues E264–Q273. Residues E264 to H283 form a disordered region. The interval H307–P326 is interaction with pAP. Disordered stretches follow at residues R421–Y478 and A514–G552. 2 consecutive short sequence motifs (nuclear localization signal) follow at residues K428–R433 and K453–K459. Residues K453 to H462 show a composition bias toward basic residues. The segment covering A514–S543 has biased composition (low complexity). The interaction with major capsid protein stretch occupies residues P569–E589.

This sequence belongs to the herpesviridae capsid scaffolding protein family. Homomultimer. Interacts with major capsid protein. In terms of assembly, exists in a monomer-dimer equilibrium with the dimer being the active species. In terms of processing, capsid scaffolding protein is cleaved by assemblin after formation of the spherical procapsid. As a result, the capsid obtains its mature, icosahedral shape. Cleavages occur at two or more sites: release (R-site) and maturation (M-site).

It localises to the host cytoplasm. The protein localises to the host nucleus. The catalysed reaction is Cleaves -Ala-|-Ser- and -Ala-|-Ala- bonds in the scaffold protein.. Functionally, acts as a scaffold protein by binding major capsid protein in the cytoplasm, inducing the nuclear localization of both proteins. Multimerizes in the nucleus such as major capsid protein forms the icosahedral T=16 capsid. Autocatalytic cleavage releases the assembly protein, and subsequently abolishes interaction with major capsid protein. Cleavages products are evicted from the capsid before or during DNA packaging. Its function is as follows. Protease that plays an essential role in virion assembly within the nucleus. Catalyzes the cleavage of the assembly protein after formation of the spherical procapsid. By that cleavage, the capsid matures and gains its icosahedral shape. The cleavage sites seem to include -Ala-Ser-, -Ala-Ala-, as well as Ala-Thr bonds. Assemblin and cleavages products are evicted from the capsid before or during DNA packaging. In terms of biological role, plays a major role in capsid assembly. Acts as a scaffold protein by binding major capsid protein. Multimerizes in the nucleus such as major capsid protein forms the icosahedral T=16 capsid. Cleaved by assemblin after capsid completion. The cleavages products are evicted from the capsid before or during DNA packaging. This Simian cytomegalovirus (strain Colburn) protein is Capsid scaffolding protein (UL80).